A 969-amino-acid chain; its full sequence is Translation initiation factor IF-2 (969 aa).

Over residues 49–63 the composition is skewed to basic and acidic residues; sequence HLRKSHGATDGDKRK. Disordered stretches follow at residues 49 to 85, 100 to 128, and 143 to 380; these read HLRK…KART, DDVS…REEE, and LRER…SFQA. Residues 105-114 are compositionally biased toward low complexity; sequence VAEQGQAQVA. Over residues 143 to 181 the composition is skewed to basic and acidic residues; the sequence is LRERQERLEREEAERRAREEAAEAERRRAEEEAAAKRAA. The segment covering 182-206 has biased composition (low complexity); it reads AEAAAAQQAAQQAAAAQQAAAPADS. Positions 209-260 are enriched in basic and acidic residues; that stretch reads DEARAAAERAAQREAAKKAEDAAREAAEKARAEQEEIRKRREAAEAEARAIR. Over residues 301–323 the composition is skewed to low complexity; the sequence is AQARPAAKKPAAAPAATPAPAGA. Residues 353–366 show a composition bias toward gly residues; it reads SSGGVDRGWRGGPK. A tr-type G domain is found at 469–638; it reads PRPPVVTVMG…LLQAEVLELK (170 aa). The interval 478–485 is G1; it reads GHVDHGKT. A GTP-binding site is contributed by 478–485; the sequence is GHVDHGKT. A G2 region spans residues 503–507; the sequence is GITQH. The segment at 524 to 527 is G3; sequence DTPG. GTP contacts are provided by residues 524–528 and 578–581; these read DTPGH and NKID. The tract at residues 578–581 is G4; that stretch reads NKID. A G5 region spans residues 614–616; that stretch reads SAK.

Belongs to the TRAFAC class translation factor GTPase superfamily. Classic translation factor GTPase family. IF-2 subfamily.

The protein localises to the cytoplasm. One of the essential components for the initiation of protein synthesis. Protects formylmethionyl-tRNA from spontaneous hydrolysis and promotes its binding to the 30S ribosomal subunits. Also involved in the hydrolysis of GTP during the formation of the 70S ribosomal complex. The protein is Translation initiation factor IF-2 of Burkholderia multivorans (strain ATCC 17616 / 249).